Here is a 340-residue protein sequence, read N- to C-terminus: Heat-inducible transcription repressor HrcA (340 aa).

Belongs to the HrcA family.

Functionally, negative regulator of class I heat shock genes (grpE-dnaK-dnaJ and groELS operons). Prevents heat-shock induction of these operons. This is Heat-inducible transcription repressor HrcA from Mycoplasma capricolum subsp. capricolum (strain California kid / ATCC 27343 / NCTC 10154).